A 209-amino-acid polypeptide reads, in one-letter code: Type III pantothenate kinase (209 aa).

5-12 contributes to the ATP binding site; it reads DIGNSNAN. Residues Tyr-68 and 72 to 75 each bind substrate; that span reads GIDR. Asp-74 serves as the catalytic Proton acceptor. A K(+)-binding site is contributed by Asp-89. ATP is bound at residue Ser-92. Thr-144 contacts substrate.

The protein belongs to the type III pantothenate kinase family. As to quaternary structure, homodimer. NH4(+) serves as cofactor. It depends on K(+) as a cofactor.

It is found in the cytoplasm. It carries out the reaction (R)-pantothenate + ATP = (R)-4'-phosphopantothenate + ADP + H(+). The protein operates within cofactor biosynthesis; coenzyme A biosynthesis; CoA from (R)-pantothenate: step 1/5. Its function is as follows. Catalyzes the phosphorylation of pantothenate (Pan), the first step in CoA biosynthesis. The protein is Type III pantothenate kinase of Campylobacter jejuni (strain RM1221).